A 97-amino-acid chain; its full sequence is uncharacterized protein (97 aa).

It to B.licheniformis xpaL1 and to B.subtilis XhlA.

This is an uncharacterized protein from Bacillus licheniformis.